Here is a 133-residue protein sequence, read N- to C-terminus: Putative elongation factor 1-delta-like protein (133 aa).

Over residues 58 to 73 (SLAGSLGPGASSGPSG) the composition is skewed to low complexity. 2 disordered regions span residues 58 to 77 (SLAG…DHSE) and 89 to 133 (NQRD…TSRG). Basic and acidic residues predominate over residues 89–102 (NQRDLAERAGEELA).

This sequence belongs to the EF-1-beta/EF-1-delta family.

This Homo sapiens (Human) protein is Putative elongation factor 1-delta-like protein (EEF1DP3).